The sequence spans 622 residues: Putative DEAD-box ATP-dependent RNA helicase 44 (622 aa).

Positions 50 to 97 (DRRSIVQISRSNSDNDDGNRPRDVKRERHRSHDHDRNRESDREFRERE) are disordered. The span at 66-97 (DGNRPRDVKRERHRSHDHDRNRESDREFRERE) shows a compositional bias: basic and acidic residues. Residues 241 to 436 (IPLGLEQRDV…RKFLRNPVVV (196 aa)) form the Helicase ATP-binding domain. 254 to 261 (SATGSGKT) contacts ATP. The DEAD box signature appears at 367 to 370 (DEAD). A Helicase C-terminal domain is found at 460-606 (RLKKLIDDLG…LVPPELARHE (147 aa)).

Belongs to the DEAD box helicase family. DDX23/PRP28 subfamily.

It catalyses the reaction ATP + H2O = ADP + phosphate + H(+). The chain is Putative DEAD-box ATP-dependent RNA helicase 44 (RH44) from Arabidopsis thaliana (Mouse-ear cress).